The sequence spans 201 residues: Protein FAR-RED-ELONGATED HYPOCOTYL 1-LIKE (201 aa).

A Nuclear localization sequence (NLS) motif is present at residues 32 to 35 (KKRK). The short motif at 43-46 (LLPL) is the Nuclear export sequence (NES) element.

It belongs to the FHY1 protein family. Homodimer and heterodimer with FHY1. Interacts with PHYA, especially upon far-red (FR) light illumination. Binds to LAF1 and HFR1. In terms of processing, inactivated by rapid reversible PHYA-mediated phosphorylation.

The protein resides in the nucleus. It localises to the cytoplasm. Its function is as follows. Can activate transcription. Essential for light-regulated PHYA nuclear accumulation and subsequent PHYA phototropic signaling processes. PHYA-specific signal transducer in response to continuous FR lights. Mediates the association of PHYA with HFR1 and LAF1 in the nucleus in response to FR conditions. Contributes to inhibition of hypocotyl elongation in continuous blue light (B). The sequence is that of Protein FAR-RED-ELONGATED HYPOCOTYL 1-LIKE from Arabidopsis thaliana (Mouse-ear cress).